The following is a 239-amino-acid chain: ATP synthase subunit a (239 aa).

Helical transmembrane passes span 27 to 47 (GQVF…VVLG), 86 to 106 (LPFI…GALI), 125 to 145 (INTT…AGLS), 190 to 210 (LAVA…VMLL), and 211 to 231 (GLFT…FYIG).

The protein belongs to the ATPase A chain family. In terms of assembly, F-type ATPases have 2 components, CF(1) - the catalytic core - and CF(0) - the membrane proton channel. CF(1) has five subunits: alpha(3), beta(3), gamma(1), delta(1), epsilon(1). CF(0) has four main subunits: a, b, b' and c.

The protein localises to the cellular thylakoid membrane. Its function is as follows. Key component of the proton channel; it plays a direct role in the translocation of protons across the membrane. This Synechococcus sp. (strain RCC307) protein is ATP synthase subunit a.